The chain runs to 435 residues: Serine--tRNA ligase (435 aa).

242-244 (TAE) serves as a coordination point for L-serine. An ATP-binding site is contributed by 273-275 (RSE). Glutamate 296 is a binding site for L-serine. 360–363 (EISS) contributes to the ATP binding site. Residue serine 396 coordinates L-serine.

Belongs to the class-II aminoacyl-tRNA synthetase family. Type-1 seryl-tRNA synthetase subfamily. In terms of assembly, homodimer. The tRNA molecule binds across the dimer.

It localises to the cytoplasm. The catalysed reaction is tRNA(Ser) + L-serine + ATP = L-seryl-tRNA(Ser) + AMP + diphosphate + H(+). The enzyme catalyses tRNA(Sec) + L-serine + ATP = L-seryl-tRNA(Sec) + AMP + diphosphate + H(+). It functions in the pathway aminoacyl-tRNA biosynthesis; selenocysteinyl-tRNA(Sec) biosynthesis; L-seryl-tRNA(Sec) from L-serine and tRNA(Sec): step 1/1. Catalyzes the attachment of serine to tRNA(Ser). Is also able to aminoacylate tRNA(Sec) with serine, to form the misacylated tRNA L-seryl-tRNA(Sec), which will be further converted into selenocysteinyl-tRNA(Sec). The protein is Serine--tRNA ligase of Vibrio atlanticus (strain LGP32) (Vibrio splendidus (strain Mel32)).